The sequence spans 270 residues: Putative phosphoenolpyruvate synthase regulatory protein (270 aa).

Position 150-157 (Gly-150–Thr-157) interacts with ADP.

It belongs to the pyruvate, phosphate/water dikinase regulatory protein family. PSRP subfamily.

It catalyses the reaction [pyruvate, water dikinase] + ADP = [pyruvate, water dikinase]-phosphate + AMP + H(+). It carries out the reaction [pyruvate, water dikinase]-phosphate + phosphate + H(+) = [pyruvate, water dikinase] + diphosphate. Its function is as follows. Bifunctional serine/threonine kinase and phosphorylase involved in the regulation of the phosphoenolpyruvate synthase (PEPS) by catalyzing its phosphorylation/dephosphorylation. In Shewanella oneidensis (strain ATCC 700550 / JCM 31522 / CIP 106686 / LMG 19005 / NCIMB 14063 / MR-1), this protein is Putative phosphoenolpyruvate synthase regulatory protein.